The following is a 392-amino-acid chain: Caveolae-associated protein 1 (392 aa).

Position 1 is an N-acetylmethionine (methionine 1). The segment covering 1–10 (MEDVTLHIVE) has biased composition (basic and acidic residues). The disordered stretch occupies residues 1-45 (MEDVTLHIVERPYSGFPDASSEGPEPTQGEARATEEPSGTGSDEL). Positions 1–100 (MEDVTLHIVE…IQGELSKLGK (100 aa)) are required for homotrimerization and for interaction with CAVIN2 and CAVIN3. A phosphoserine mark is found at serine 21 and serine 38. At threonine 40 the chain carries Phosphothreonine. Residues serine 42 and serine 48 each carry the phosphoserine modification. The nuclear export signal stretch occupies residues 54 to 64 (VLVLSLLDKII). The segment at 55 to 77 (LVLSLLDKIIGAVDQIQLTQAQL) is leucine-zipper 1. A Glycyl lysine isopeptide (Lys-Gly) (interchain with G-Cter in SUMO2) cross-link involves residue lysine 118. Serine 120 bears the Phosphoserine mark. A Glycyl lysine isopeptide (Lys-Gly) (interchain with G-Cter in SUMO2) cross-link involves residue lysine 124. The segment at 138–154 (KKLEVNEAELLRRRNFK) is nuclear localization signal. At tyrosine 158 the chain carries Phosphotyrosine. A Glycyl lysine isopeptide (Lys-Gly) (interchain with G-Cter in SUMO1); alternate cross-link involves residue lysine 163. Lysine 163 participates in a covalent cross-link: Glycyl lysine isopeptide (Lys-Gly) (interchain with G-Cter in SUMO2); alternate. Lysine 167 participates in a covalent cross-link: Glycyl lysine isopeptide (Lys-Gly) (interchain with G-Cter in SUMO2). Residues 168–188 (LSVSKSLKESEALPEKEGDEL) are leucine-zipper 2. Residues serine 169 and serine 171 each carry the phosphoserine modification. Lysine 172 participates in a covalent cross-link: Glycyl lysine isopeptide (Lys-Gly) (interchain with G-Cter in SUMO2). Residues serine 173 and serine 177 each carry the phosphoserine modification. Over residues 173-183 (SLKESEALPEK) the composition is skewed to basic and acidic residues. The interval 173–197 (SLKESEALPEKEGDELGEGERPEDD) is disordered. Residues 184–197 (EGDELGEGERPEDD) are compositionally biased toward acidic residues. Phosphothreonine is present on threonine 198. Residues 201-284 (IELSSDEAVE…RMNKLGTRLV (84 aa)) adopt a coiled-coil conformation. Phosphoserine occurs at positions 204 and 205. The interval 235–251 (KKAFSKEKMEKTKVRTR) is nuclear localization signal. The interval 259 to 299 (LKTKENLEKTRHTLEKRMNKLGTRLVPVERREKLKTSRDKL) is leucine-zipper 3. Serine 302 bears the Phosphoserine mark. Threonine 304 carries the post-translational modification Phosphothreonine. Tyrosine 310 bears the Phosphotyrosine mark. Residue lysine 328 forms a Glycyl lysine isopeptide (Lys-Gly) (interchain with G-Cter in SUMO2) linkage. Residues 347–367 (GPEDDEVGAERGEATDLLRGS) form a disordered region. Phosphoserine is present on residues serine 367, serine 368, serine 381, serine 389, and serine 391.

This sequence belongs to the CAVIN family. As to quaternary structure, component of the CAVIN complex composed of CAVIN1, CAVIN2, CAVIN3 and CAVIN4. Homotrimer. Interacts with LIPE in the adipocyte cytoplasm. Interacts with RNA polymerase I subunit POLR1A/RPA1. Interacts with TTF1. Binds the 3' end of pre-rRNA. Interacts with transcription factor ZNF148. Interacts with CAV1, CAVIN2 and CAVIN3. Interacts with CAVIN4. Post-translationally, phosphorylated. Present in active and inactive forms. Changes in phosphorylation pattern may alter activity. Phosphorylation at Tyr-158 is essential for its function in the regulation of the ribosomal transcriptional activity. In terms of processing, monoubiquitinated. Expressed in the heart, stomach, adipose tissue and lung (at protein level). Expressed in testis, kidney, muscle, liver, spleen and brain.

Its subcellular location is the membrane. The protein localises to the caveola. It localises to the cell membrane. It is found in the microsome. The protein resides in the endoplasmic reticulum. Its subcellular location is the cytoplasm. The protein localises to the cytosol. It localises to the mitochondrion. It is found in the nucleus. In terms of biological role, plays an important role in caveolae formation and organization. Essential for the formation of caveolae in all tissues. Core component of the CAVIN complex which is essential for recruitment of the complex to the caveolae in presence of calveolin-1 (CAV1). Essential for normal oligomerization of CAV1. Promotes ribosomal transcriptional activity in response to metabolic challenges in the adipocytes and plays an important role in the formation of the ribosomal transcriptional loop. Dissociates transcription complexes paused by DNA-bound TTF1, thereby releasing both RNA polymerase I and pre-RNA from the template. The caveolae biogenesis pathway is required for the secretion of proteins such as GASK1A. The protein is Caveolae-associated protein 1 (Cavin1) of Mus musculus (Mouse).